The sequence spans 865 residues: DNA topoisomerase 1 (865 aa).

A Toprim domain is found at 3–142; the sequence is KALVIVESPA…RYSRVVFNEI (140 aa). Glu-9 serves as a coordination point for Mg(2+). Residues 37 to 65 are disordered; that stretch reads LPTSGSAAKKSADSTSTKTAKKPKKDERG. Over residues 39–54 the composition is skewed to low complexity; that stretch reads TSGSAAKKSADSTSTK. Asp-111 contributes to the Mg(2+) binding site. The region spanning 158-575 is the Topo IA-type catalytic domain; that stretch reads NIDRVNAQQA…HFFSDFTQQL (418 aa). The tract at residues 192–197 is interaction with DNA; that stretch reads SAGRVQ. Tyr-319 functions as the O-(5'-phospho-DNA)-tyrosine intermediate in the catalytic mechanism. C4-type zinc fingers lie at residues 599 to 630, 662 to 689, and 711 to 736; these read CPTC…KERC, CPKC…NPTC, and CEKC…NEEC.

This sequence belongs to the type IA topoisomerase family. As to quaternary structure, monomer. It depends on Mn(2+) as a cofactor. Ca(2+) is required as a cofactor.

It carries out the reaction ATP-independent breakage of single-stranded DNA, followed by passage and rejoining.. In terms of biological role, releases the supercoiling and torsional tension of DNA, which is introduced during the DNA replication and transcription, by transiently cleaving and rejoining one strand of the DNA duplex. Introduces a single-strand break via transesterification at a target site in duplex DNA. The scissile phosphodiester is attacked by the catalytic tyrosine of the enzyme, resulting in the formation of a DNA-(5'-phosphotyrosyl)-enzyme intermediate and the expulsion of a 3'-OH DNA strand. The free DNA strand then undergoes passage around the unbroken strand, thus removing DNA supercoils. Finally, in the religation step, the DNA 3'-OH attacks the covalent intermediate to expel the active-site tyrosine and restore the DNA phosphodiester backbone. The sequence is that of DNA topoisomerase 1 from Escherichia coli (strain K12).